The sequence spans 701 residues: Aryl hydrocarbon receptor repressor (701 aa).

Residues 25 to 78 (TMGAEKSNPSKRHRDRLNTELDHLASLLPFSPDIISKLDKLSVLRLSVSYLRVK) enclose the bHLH domain. The 71-residue stretch at 106–176 (PVQEGRLLLE…RQLHWAMDPP (71 aa)) folds into the PAS domain. Positions 409–430 (TEQRSQESTTKLTRQPSKNEPS) are enriched in polar residues. The tract at residues 409-432 (TEQRSQESTTKLTRQPSKNEPSTC) is disordered. A needed for transcriptional repression region spans residues 555 to 701 (ASTTSCLWLG…SKGSDGIFLP (147 aa)). Glycyl lysine isopeptide (Lys-Gly) (interchain with G-Cter in SUMO2) cross-links involve residues lysine 583 and lysine 660.

In terms of assembly, interacts with ARNT, ANKRA2, HDAC4 and HDAC5. Interacts with ARNT; forms a heterodimer with ARNT.

Its subcellular location is the cytoplasm. The protein localises to the nucleus. Mediates dioxin toxicity and is involved in regulation of cell growth and differentiation. Represses the transcription activity of AHR by competing with this transcription factor for heterodimer formation with the ARNT and subsequently binding to the xenobiotic response element (XRE) sequence present in the promoter regulatory region of variety of genes. Represses CYP1A1 by binding the XRE sequence and recruiting ANKRA2, HDAC4 and/or HDAC5. Autoregulates its expression by associating with its own XRE site. In Mus musculus (Mouse), this protein is Aryl hydrocarbon receptor repressor (Ahrr).